A 462-amino-acid chain; its full sequence is Mitochondrial-processing peptidase subunit beta (462 aa).

Residues 1–20 constitute a mitochondrion transit peptide; the sequence is MFSRTASKFRNTRRLLSTIS. A Zn(2+)-binding site is contributed by H70. E73 acts as the Proton acceptor in catalysis. Zn(2+) is bound by residues H74 and E150. At S243 the chain carries Phosphoserine.

The protein belongs to the peptidase M16 family. Heterodimer of MAS2 (alpha) and MAS1 (beta) subunits, forming the mitochondrial processing protease (MPP) in which MAS2 is involved in substrate recognition and binding and MAS1 is the catalytic subunit. It depends on Zn(2+) as a cofactor.

Its subcellular location is the mitochondrion matrix. The enzyme catalyses Release of N-terminal transit peptides from precursor proteins imported into the mitochondrion, typically with Arg in position P2.. Binding to MAS2 is required for catalytic activity. Inhibited by high levels (&gt; 1uM) of zinc. Inhibited by metal chelators ethylenediaminetetraacetic acid (EDTA) and O-phenanthroline. In terms of biological role, catalytic subunit of the essential mitochondrial processing protease (MPP), which cleaves the mitochondrial sequence off newly imported precursors proteins. Preferentially, cleaves after an arginine at position P2. The protein is Mitochondrial-processing peptidase subunit beta of Saccharomyces cerevisiae (strain ATCC 204508 / S288c) (Baker's yeast).